A 475-amino-acid polypeptide reads, in one-letter code: 3-isopropylmalate dehydratase large subunit (475 aa).

Residues C352, C413, and C416 each contribute to the [4Fe-4S] cluster site.

It belongs to the aconitase/IPM isomerase family. LeuC type 1 subfamily. Heterodimer of LeuC and LeuD. [4Fe-4S] cluster is required as a cofactor.

The catalysed reaction is (2R,3S)-3-isopropylmalate = (2S)-2-isopropylmalate. Its pathway is amino-acid biosynthesis; L-leucine biosynthesis; L-leucine from 3-methyl-2-oxobutanoate: step 2/4. Its function is as follows. Catalyzes the isomerization between 2-isopropylmalate and 3-isopropylmalate, via the formation of 2-isopropylmaleate. The protein is 3-isopropylmalate dehydratase large subunit of Pseudomonas syringae pv. tomato (strain ATCC BAA-871 / DC3000).